The chain runs to 483 residues: Glutamyl-tRNA(Gln) amidotransferase subunit A (483 aa).

Residues Lys75 and Ser150 each act as charge relay system in the active site. The active-site Acyl-ester intermediate is the Ser174.

Belongs to the amidase family. GatA subfamily. In terms of assembly, heterotrimer of A, B and C subunits.

It carries out the reaction L-glutamyl-tRNA(Gln) + L-glutamine + ATP + H2O = L-glutaminyl-tRNA(Gln) + L-glutamate + ADP + phosphate + H(+). Functionally, allows the formation of correctly charged Gln-tRNA(Gln) through the transamidation of misacylated Glu-tRNA(Gln) in organisms which lack glutaminyl-tRNA synthetase. The reaction takes place in the presence of glutamine and ATP through an activated gamma-phospho-Glu-tRNA(Gln). The chain is Glutamyl-tRNA(Gln) amidotransferase subunit A from Gloeothece citriformis (strain PCC 7424) (Cyanothece sp. (strain PCC 7424)).